The following is a 323-amino-acid chain: ATP synthase gamma chain (323 aa).

The protein belongs to the ATPase gamma chain family. In terms of assembly, F-type ATPases have 2 components, CF(1) - the catalytic core - and CF(0) - the membrane proton channel. CF(1) has five subunits: alpha(3), beta(3), gamma(1), delta(1), epsilon(1). CF(0) has three main subunits: a, b and c.

It is found in the cell inner membrane. In terms of biological role, produces ATP from ADP in the presence of a proton gradient across the membrane. The gamma chain is believed to be important in regulating ATPase activity and the flow of protons through the CF(0) complex. This Rickettsia rickettsii (strain Iowa) protein is ATP synthase gamma chain.